Consider the following 142-residue polypeptide: Hemoglobin subunit alpha-A (142 aa).

The region spanning Val2–Arg142 is the Globin domain. O2 is bound at residue His59. Residue His88 participates in heme b binding.

Belongs to the globin family. In terms of assembly, heterotetramer of two alpha chains and two beta chains. As to expression, red blood cells.

Its function is as follows. Involved in oxygen transport from the lung to the various peripheral tissues. The polypeptide is Hemoglobin subunit alpha-A (HBAA) (Anas platyrhynchos platyrhynchos (Northern mallard)).